Reading from the N-terminus, the 1668-residue chain is Kinesin-like protein KIF21B (1668 aa).

Residues 8–371 (CVKVAVRIRP…LKYANRARNI (364 aa)) enclose the Kinesin motor domain. 87 to 94 (GQTGAGKT) is an ATP binding site. Residues 372–465 (KNKVVVNQDK…LMSQEANLLL (94 aa)) are a coiled coil. The interaction with TRIM3 stretch occupies residues 401–1100 (MEYKAGKRVI…LQALIYNVQH (700 aa)). 2 disordered regions span residues 553–629 (KKKE…PEEK) and 837–866 (RVGLKPPNMDSGAEVSASTTSSEAESGARS). The span at 579 to 628 (NSEETDENEAEEEEEERDESGCEEEEGREDEDEDSGSEESLVDSDSDPEE) shows a compositional bias: acidic residues. A Phosphoserine modification is found at Ser-580. Position 583 is a phosphothreonine (Thr-583). The segment covering 847-866 (SGAEVSASTTSSEAESGARS) has biased composition (low complexity). The stretch at 924 to 1019 (IIDIVMQRMT…TKEELDSTDT (96 aa)) forms a coiled coil. 3 positions are modified to phosphoserine: Ser-1150, Ser-1168, and Ser-1217. Polar residues predominate over residues 1199–1219 (LPTRGSTFPRQSRGATDTSPL). Residues 1199–1253 (LPTRGSTFPRQSRGATDTSPLTRRKSYDRGQPIRSTDMGFTPPSSPPTRPRNDRN) form a disordered region. Position 1239 is a phosphothreonine (Thr-1239). Position 1243 is a phosphoserine (Ser-1243). WD repeat units lie at residues 1308-1345 (GHTKPILCLDATDELLFTGSKDRSCKMWNLVTGQEIAA), 1348-1386 (GHPNNVVSIKYCSHSGLVFSVSSSYIKVWDIRDSAKCIR), 1412-1450 (QGEHQINQMALSPSGSMLYVASGNAVRIWELNRFQPIGK), 1453-1495 (GHIG…TGTI), 1504-1541 (PHYDGIECLAIQGDILFSGSRDNGIKKWDLDQQELIQQ), 1545-1584 (AHKDWVCALAFVPGRPMLLSACRAGFIKVWNVDNFTPIGE), and 1587-1624 (GHDSPINAICTNSKHIFTASSDCRVKLWNYVPGLTPCL).

This sequence belongs to the TRAFAC class myosin-kinesin ATPase superfamily. Kinesin family. As to quaternary structure, interacts with TRIM3; the interaction positively affects motility of KIF21B. Interacts with GABARAP and GABA(A) receptor subunits: GABRG2, GABRA1 and GABRA2. May interact with GABA(A) receptor subunits: GABRB2 and GABRB3. In terms of tissue distribution, expressed in brain (at protein level). Expressed in spleen and at lower levels in testes.

The protein localises to the cytoplasm. It localises to the cytoskeleton. Its subcellular location is the cell projection. It is found in the dendrite. The protein resides in the growth cone. The protein localises to the axon. It localises to the cytoplasmic vesicle. In terms of biological role, plus-end directed microtubule-dependent motor protein which displays processive activity. Is involved in regulation of microtubule dynamics, synapse function and neuronal morphology, including dendritic tree branching and spine formation. Plays a role in lerning and memory. Involved in delivery of gamma-aminobutyric acid (GABA(A)) receptor to cell surface. The sequence is that of Kinesin-like protein KIF21B (Kif21b) from Mus musculus (Mouse).